A 222-amino-acid polypeptide reads, in one-letter code: Probable GTP-binding protein EngB (222 aa).

The EngB-type G domain occupies Asn-23 to Gly-217. GTP contacts are provided by residues Gly-31–Ser-38, Gly-57–Leu-61, Asp-82–Gly-85, Thr-152–Asp-155, and Phe-191–Ala-193. Mg(2+) is bound by residues Ser-38 and Thr-59.

The protein belongs to the TRAFAC class TrmE-Era-EngA-EngB-Septin-like GTPase superfamily. EngB GTPase family. Mg(2+) is required as a cofactor.

In terms of biological role, necessary for normal cell division and for the maintenance of normal septation. The chain is Probable GTP-binding protein EngB from Helicobacter hepaticus (strain ATCC 51449 / 3B1).